Reading from the N-terminus, the 498-residue chain is GTPase Der (498 aa).

EngA-type G domains lie at Pro3–Leu167 and Ile210–Thr383. GTP is bound by residues Gly9 to Ser16, Asp57 to Ile61, Asn119 to Asp122, Gly216 to Ser223, Asp263 to Val267, and Asn328 to Asp331. Residues Thr384–Glu468 enclose the KH-like domain.

It belongs to the TRAFAC class TrmE-Era-EngA-EngB-Septin-like GTPase superfamily. EngA (Der) GTPase family. In terms of assembly, associates with the 50S ribosomal subunit.

GTPase that plays an essential role in the late steps of ribosome biogenesis. The protein is GTPase Der of Vibrio parahaemolyticus serotype O3:K6 (strain RIMD 2210633).